A 323-amino-acid polypeptide reads, in one-letter code: Beta-ketoacyl-[acyl-carrier-protein] synthase III (323 aa).

Catalysis depends on residues cysteine 113 and histidine 250. The ACP-binding stretch occupies residues 251-255 (QANKR). Asparagine 280 is a catalytic residue.

Belongs to the thiolase-like superfamily. FabH family. In terms of assembly, homodimer.

The protein localises to the cytoplasm. The catalysed reaction is malonyl-[ACP] + acetyl-CoA + H(+) = 3-oxobutanoyl-[ACP] + CO2 + CoA. Its pathway is lipid metabolism; fatty acid biosynthesis. Functionally, catalyzes the condensation reaction of fatty acid synthesis by the addition to an acyl acceptor of two carbons from malonyl-ACP. Catalyzes the first condensation reaction which initiates fatty acid synthesis and may therefore play a role in governing the total rate of fatty acid production. Possesses both acetoacetyl-ACP synthase and acetyl transacylase activities. Its substrate specificity determines the biosynthesis of branched-chain and/or straight-chain of fatty acids. This Brucella canis (strain ATCC 23365 / NCTC 10854 / RM-666) protein is Beta-ketoacyl-[acyl-carrier-protein] synthase III.